A 487-amino-acid polypeptide reads, in one-letter code: Inosine-5'-monophosphate dehydrogenase (487 aa).

2 CBS domains span residues 93-149 (IVSD…NKTV) and 153-214 (MTPK…CKDE). NAD(+) contacts are provided by residues Asp248, 248–250 (DSS), and 298–300 (GIG). 2 residues coordinate K(+): Gly300 and Gly302. IMP is bound at residue Ser303. Residue Cys305 coordinates K(+). Cys305 serves as the catalytic Thioimidate intermediate. IMP contacts are provided by residues 338–340 (DGG), 361–362 (GS), and 385–389 (YRGMG). Residue Arg401 is the Proton acceptor of the active site. Glu415 contacts IMP. K(+)-binding residues include Glu469, Ser470, and His471.

The protein belongs to the IMPDH/GMPR family. Homotetramer. K(+) is required as a cofactor.

It catalyses the reaction IMP + NAD(+) + H2O = XMP + NADH + H(+). It functions in the pathway purine metabolism; XMP biosynthesis via de novo pathway; XMP from IMP: step 1/1. Its activity is regulated as follows. Mycophenolic acid (MPA) is a non-competitive inhibitor that prevents formation of the closed enzyme conformation by binding to the same site as the amobile flap. In contrast, mizoribine monophosphate (MZP) is a competitive inhibitor that induces the closed conformation. MPA is a potent inhibitor of mammalian IMPDHs but a poor inhibitor of the bacterial enzymes. MZP is a more potent inhibitor of bacterial IMPDH. Functionally, catalyzes the conversion of inosine 5'-phosphate (IMP) to xanthosine 5'-phosphate (XMP), the first committed and rate-limiting step in the de novo synthesis of guanine nucleotides, and therefore plays an important role in the regulation of cell growth. This is Inosine-5'-monophosphate dehydrogenase from Pasteurella multocida (strain Pm70).